Reading from the N-terminus, the 494-residue chain is Glycerol kinase (494 aa).

Thr-13 lines the ADP pocket. 3 residues coordinate ATP: Thr-13, Thr-14, and Ser-15. A sn-glycerol 3-phosphate-binding site is contributed by Thr-13. Position 17 (Arg-17) interacts with ADP. Sn-glycerol 3-phosphate-binding residues include Arg-83, Glu-84, Tyr-135, and Asp-244. Residues Arg-83, Glu-84, Tyr-135, Asp-244, and Gln-245 each contribute to the glycerol site. ADP is bound by residues Thr-266 and Gly-309. ATP is bound by residues Thr-266, Gly-309, Gln-313, and Gly-410. The ADP site is built by Gly-410 and Asn-414.

The protein belongs to the FGGY kinase family.

The enzyme catalyses glycerol + ATP = sn-glycerol 3-phosphate + ADP + H(+). The protein operates within polyol metabolism; glycerol degradation via glycerol kinase pathway; sn-glycerol 3-phosphate from glycerol: step 1/1. Its activity is regulated as follows. Inhibited by fructose 1,6-bisphosphate (FBP). Functionally, key enzyme in the regulation of glycerol uptake and metabolism. Catalyzes the phosphorylation of glycerol to yield sn-glycerol 3-phosphate. This chain is Glycerol kinase, found in Shewanella oneidensis (strain ATCC 700550 / JCM 31522 / CIP 106686 / LMG 19005 / NCIMB 14063 / MR-1).